A 607-amino-acid polypeptide reads, in one-letter code: Albumin (607 aa).

An N-terminal signal peptide occupies residues 1–18 (MKWVTFISLLLLFSSAYS). The propeptide occupies 19–24 (RGVFRR). 3 consecutive Albumin domains span residues 19-209 (RGVF…DAMR), 210-402 (EKVL…KLKH), and 403-600 (LVDE…KLVA). H27 contributes to the Cu cation binding site. Residue S29 is modified to Phosphoserine. E30 and D37 together coordinate Ca(2+). C77 and C86 are joined by a disulfide. Phosphoserine occurs at positions 82 and 89. A Zn(2+)-binding site is contributed by H91. 6 disulfides stabilise this stretch: C99/C115, C114/C125, C147/C192, C191/C200, C223/C269, and C268/C276. T107 carries the phosphothreonine modification. K228 is subject to N6-succinyllysine. E267 is a binding site for Ca(2+). Positions 270 and 272 each coordinate Zn(2+). D272, E275, D278, and D282 together coordinate Ca(2+). Disulfide bonds link C288/C302, C301/C312, C339/C384, C383/C392, C415/C461, C460/C471, C484/C500, and C499/C510. S296 bears the Phosphoserine mark. Residue S442 is modified to Phosphoserine. T443 and T445 each carry phosphothreonine. At K459 the chain carries N6-succinyllysine. S512 is subject to Phosphoserine. 2 disulfides stabilise this stretch: C537–C582 and C581–C590. The residue at position 557 (K557) is an N6-methyllysine. Residue T569 is modified to Phosphothreonine. K587 is subject to N6-succinyllysine.

Belongs to the ALB/AFP/VDB family. In terms of assembly, interacts with FCGRT; this interaction regulates ALB homeostasis. Interacts with TASOR. In plasma, occurs in a covalently-linked complex with chromophore-bound alpha-1-microglobulin; this interaction does not prevent fatty acid binding to ALB. Post-translationally, phosphorylated by FAM20C in the extracellular medium. In terms of tissue distribution, plasma.

The protein resides in the secreted. Functionally, binds water, Ca(2+), Na(+), K(+), fatty acids, hormones, bilirubin and drugs. Its main function is the regulation of the colloidal osmotic pressure of blood. Major zinc transporter in plasma, typically binds about 80% of all plasma zinc. Major calcium and magnesium transporter in plasma, binds approximately 45% of circulating calcium and magnesium in plasma. Potentially has more than two calcium-binding sites and might additionally bind calcium in a non-specific manner. The shared binding site between zinc and calcium at residue Asp-272 suggests a crosstalk between zinc and calcium transport in the blood. The rank order of affinity is zinc &gt; calcium &gt; magnesium. Binds to the bacterial siderophore enterobactin and inhibits enterobactin-mediated iron uptake of E.coli from ferric transferrin, and may thereby limit the utilization of iron and growth of enteric bacteria such as E.coli. Does not prevent iron uptake by the bacterial siderophore aerobactin. The chain is Albumin (ALB) from Ovis aries (Sheep).